We begin with the raw amino-acid sequence, 410 residues long: Acetate kinase (410 aa).

Mg(2+) is bound at residue N7. An ATP-binding site is contributed by K14. A substrate-binding site is contributed by R98. D155 acts as the Proton donor/acceptor in catalysis. ATP-binding positions include 215 to 219 (HLGNG), 290 to 292 (DMR), and 338 to 342 (GIGEN). E392 contributes to the Mg(2+) binding site.

It belongs to the acetokinase family. In terms of assembly, homodimer. It depends on Mg(2+) as a cofactor. Mn(2+) serves as cofactor.

The protein resides in the cytoplasm. The enzyme catalyses acetate + ATP = acetyl phosphate + ADP. It functions in the pathway metabolic intermediate biosynthesis; acetyl-CoA biosynthesis; acetyl-CoA from acetate: step 1/2. Catalyzes the formation of acetyl phosphate from acetate and ATP. Can also catalyze the reverse reaction. The protein is Acetate kinase of Kocuria rhizophila (strain ATCC 9341 / DSM 348 / NBRC 103217 / DC2201).